A 207-amino-acid chain; its full sequence is MFKFTGHAGIVVPLDISNIDTDIIIPKQFLKRVNKIGFGKYLFHDWRFIDANQLVKNEDFILNKKIYKNASILLTRENFGCGSSREHAVWSLVDYGFKVIIAPSFADIFYNNSFNNKLLLITLSSSEITFLFDIVKNNIGITFDVSLVEKTVTVNKEVFSFELDDFHYFCLLNDLDNIDLTMKHLSEIKSYESRISDFLLERRDFQS.

This sequence belongs to the LeuD family. LeuD type 1 subfamily. In terms of assembly, heterodimer of LeuC and LeuD.

The enzyme catalyses (2R,3S)-3-isopropylmalate = (2S)-2-isopropylmalate. The protein operates within amino-acid biosynthesis; L-leucine biosynthesis; L-leucine from 3-methyl-2-oxobutanoate: step 2/4. Functionally, catalyzes the isomerization between 2-isopropylmalate and 3-isopropylmalate, via the formation of 2-isopropylmaleate. The polypeptide is 3-isopropylmalate dehydratase small subunit (leuD) (Buchnera aphidicola subsp. Acyrthosiphon pisum (strain APS) (Acyrthosiphon pisum symbiotic bacterium)).